A 937-amino-acid chain; its full sequence is Periplasmic nitrate reductase (937 aa).

A signal peptide (tat-type signal) is located at residues 1–42; that stretch reads MTSKIQGKKPTLSRRDFIKSAAAASAAASVGLSIPSVMSAEA. Residues 49 to 110 enclose the 4Fe-4S Mo/W bis-MGD-type domain; it reads WKWDKSVCRF…FCAKIMYGAD (62 aa). [4Fe-4S] cluster is bound by residues cysteine 56, cysteine 59, cysteine 63, and cysteine 96. Mo-bis(molybdopterin guanine dinucleotide) contacts are provided by residues lysine 98, glutamine 166, asparagine 191, cysteine 195, 228–235, methionine 433, glutamine 437, asparagine 543, 568–569, lysine 591, aspartate 618, and 827–836; these read WGANMAEM, SE, and TGRVLEHWHS. Tryptophan 903 contacts substrate. Residues asparagine 911 and lysine 928 each contribute to the Mo-bis(molybdopterin guanine dinucleotide) site.

Belongs to the prokaryotic molybdopterin-containing oxidoreductase family. NasA/NapA/NarB subfamily. As to quaternary structure, component of the periplasmic nitrate reductase NapAB complex composed of NapA and NapB. The cofactor is [4Fe-4S] cluster. Mo-bis(molybdopterin guanine dinucleotide) serves as cofactor. In terms of processing, predicted to be exported by the Tat system. The position of the signal peptide cleavage has not been experimentally proven.

The protein resides in the periplasm. It catalyses the reaction 2 Fe(II)-[cytochrome] + nitrate + 2 H(+) = 2 Fe(III)-[cytochrome] + nitrite + H2O. Functionally, catalytic subunit of the periplasmic nitrate reductase complex NapAB. Receives electrons from NapB and catalyzes the reduction of nitrate to nitrite. The protein is Periplasmic nitrate reductase of Helicobacter hepaticus (strain ATCC 51449 / 3B1).